Here is a 200-residue protein sequence, read N- to C-terminus: Recombination protein RecR (200 aa).

The segment at Cys58–Cys73 adopts a C4-type zinc-finger fold. The Toprim domain maps to Gly81–Ala176.

It belongs to the RecR family.

Its function is as follows. May play a role in DNA repair. It seems to be involved in an RecBC-independent recombinational process of DNA repair. It may act with RecF and RecO. In Amoebophilus asiaticus (strain 5a2), this protein is Recombination protein RecR.